Here is a 516-residue protein sequence, read N- to C-terminus: Lysine--tRNA ligase (516 aa).

The disordered stretch occupies residues Met1–Glu23. The Mg(2+) site is built by Glu426 and Glu433.

The protein belongs to the class-II aminoacyl-tRNA synthetase family. Homodimer. The cofactor is Mg(2+).

The protein localises to the cytoplasm. It carries out the reaction tRNA(Lys) + L-lysine + ATP = L-lysyl-tRNA(Lys) + AMP + diphosphate. The protein is Lysine--tRNA ligase of Cupriavidus pinatubonensis (strain JMP 134 / LMG 1197) (Cupriavidus necator (strain JMP 134)).